We begin with the raw amino-acid sequence, 396 residues long: Elongation factor Tu-B (396 aa).

The tr-type G domain occupies 10–206; it reads KLHVNVGTIG…ALDTFIPDPT (197 aa). The G1 stretch occupies residues 19-26; it reads GHVDHGKT. Residue 19 to 26 participates in GTP binding; it reads GHVDHGKT. T26 contacts Mg(2+). The segment at 60 to 64 is G2; it reads GITIS. The tract at residues 81–84 is G3; sequence DCPG. GTP is bound by residues 81–85 and 136–139; these read DCPGH and NKAD. A G4 region spans residues 136 to 139; that stretch reads NKAD. A G5 region spans residues 174 to 176; sequence SAR.

Belongs to the TRAFAC class translation factor GTPase superfamily. Classic translation factor GTPase family. EF-Tu/EF-1A subfamily. Monomer.

It is found in the cytoplasm. It carries out the reaction GTP + H2O = GDP + phosphate + H(+). Functionally, GTP hydrolase that promotes the GTP-dependent binding of aminoacyl-tRNA to the A-site of ribosomes during protein biosynthesis. The polypeptide is Elongation factor Tu-B (Xanthomonas campestris pv. campestris (strain ATCC 33913 / DSM 3586 / NCPPB 528 / LMG 568 / P 25)).